We begin with the raw amino-acid sequence, 134 residues long: Large ribosomal subunit protein bL21 (134 aa).

The protein belongs to the bacterial ribosomal protein bL21 family. As to quaternary structure, part of the 50S ribosomal subunit. Contacts protein L20.

This protein binds to 23S rRNA in the presence of protein L20. The chain is Large ribosomal subunit protein bL21 from Pelagibacter ubique (strain HTCC1062).